The following is a 474-amino-acid chain: Mitogen-activated protein kinase pmk-3 (474 aa).

Positions 1–13 (MASVPSSSSLPVS) are enriched in low complexity. Residues 1–90 (MASVPSSSSL…EEEEDILSKP (90 aa)) form a disordered region. A compositionally biased stretch (polar residues) spans 30-48 (KRSNNQSQPPESYEPNTWL). Residues 52–69 (REQEQQKKLAAENIKKQS) show a composition bias toward basic and acidic residues. Residues 114–419 (YDVEPNSIEY…VEEAIQHPYL (306 aa)) form the Protein kinase domain. Residues 124–132 (LGGGSFGNV) and Lys150 each bind ATP. Asp252 acts as the Proton acceptor in catalysis. A Phosphothreonine modification is found at Thr285. The TXY motif lies at 285 to 287 (TQY). Phosphotyrosine is present on Tyr287.

The protein belongs to the protein kinase superfamily. CMGC Ser/Thr protein kinase family. MAP kinase subfamily. In terms of assembly, interacts with mak-2. May interact with vhp-1. May interact with uev-3. It depends on Mg(2+) as a cofactor. Post-translationally, dually phosphorylated on Thr-285 and Tyr-287, which activates the enzyme. In terms of tissue distribution, expressed throughout the intestine.

It is found in the nucleus. The protein resides in the cytoplasm. It localises to the cell projection. Its subcellular location is the axon. The protein localises to the dendrite. It is found in the cilium. It catalyses the reaction L-seryl-[protein] + ATP = O-phospho-L-seryl-[protein] + ADP + H(+). It carries out the reaction L-threonyl-[protein] + ATP = O-phospho-L-threonyl-[protein] + ADP + H(+). Activated by phosphorylation on threonine and tyrosine. Functionally, responds to activation by environmental stress and pro-inflammatory cytokines by phosphorylating downstream targets. Involved in axon regeneration after injury, probably downstream of dlk-1 and mkk-4 and upstream of mak-2. May phosphorylate mak-2. Plays a role in cilium length regulation, possibly by reducing rab-5 mediated endocytosis. Plays a role in the formation of muscle connections, also called muscle arm extensions, between the body wall and the motor axons in the dorsal and ventral cord. This Caenorhabditis elegans protein is Mitogen-activated protein kinase pmk-3 (pmk-3).